The primary structure comprises 116 residues: Nucleoid-associated protein P9301_00191 (116 aa).

It belongs to the YbaB/EbfC family. Homodimer.

The protein localises to the cytoplasm. Its subcellular location is the nucleoid. Functionally, binds to DNA and alters its conformation. May be involved in regulation of gene expression, nucleoid organization and DNA protection. This is Nucleoid-associated protein P9301_00191 from Prochlorococcus marinus (strain MIT 9301).